Here is a 429-residue protein sequence, read N- to C-terminus: Ribosomal RNA small subunit methyltransferase B (429 aa).

S-adenosyl-L-methionine-binding positions include 254 to 260 (CAAPGGK), Asp-277, Asp-303, and Asp-322. The active-site Nucleophile is the Cys-375.

The protein belongs to the class I-like SAM-binding methyltransferase superfamily. RsmB/NOP family.

Its subcellular location is the cytoplasm. It carries out the reaction cytidine(967) in 16S rRNA + S-adenosyl-L-methionine = 5-methylcytidine(967) in 16S rRNA + S-adenosyl-L-homocysteine + H(+). Specifically methylates the cytosine at position 967 (m5C967) of 16S rRNA. In Escherichia coli (strain SMS-3-5 / SECEC), this protein is Ribosomal RNA small subunit methyltransferase B.